Consider the following 1038-residue polypeptide: Importin-7 (1038 aa).

Methionine 1 bears the N-acetylmethionine mark. An Importin N-terminal domain is found at 22 to 101; that stretch reads AERQLNEAHK…RENIVEAIIH (80 aa). Residues 881–910 form a disordered region; the sequence is EHENDSDDDDEAEDDDETEELGSDEDDIDE. The span at 884-910 shows a compositional bias: acidic residues; the sequence is NDSDDDDEAEDDDETEELGSDEDDIDE. A Phosphoserine modification is found at serine 886. Threonine 898 bears the Phosphothreonine mark. Serine 903 and serine 1020 each carry phosphoserine.

This sequence belongs to the importin beta family. In terms of assembly, forms a heterodimer with KPNB1. Interacts with histone H1. Interacts with H2A, H2B, H3 and H4 histones. Interacts with SNUPN and XPO1. Interacts with RPS7 and RPL5. Interacts with RPL23A (via BIB domain). Binds directly to nuclear pore complexes. Interacts with SMAD4 and NUP93; translocates SMAD4 to the nucleus through the NPC upon BMP7 stimulation resulting in activation of SMAD4 signaling. Interacts with phosphorylated SMAD2; the interaction facilitates translocation of SMAD2 to the nucleus. Interacts with SRP19. Interacts with RUNX2; the interaction inhibits RUNX2 nuclear translocation in osteoblasts. Interacts with HDAC6, DLX3 and KLF4; the interaction facilitates HDAC6, DLX3 and KLF4 nuclear translocation in dental papilla cells. As to quaternary structure, (Microbial infection) Interacts with HIV-1 reverse transcription complex integrase and rev.

The protein resides in the cytoplasm. Its subcellular location is the nucleus. Functions in nuclear protein import, either by acting as autonomous nuclear transport receptor or as an adapter-like protein in association with the importin-beta subunit KPNB1. Acting autonomously, is thought to serve itself as receptor for nuclear localization signals (NLS) and to promote translocation of import substrates through the nuclear pore complex (NPC) by an energy requiring, Ran-dependent mechanism. At the nucleoplasmic side of the NPC, Ran binds to importin, the importin/substrate complex dissociates and importin is re-exported from the nucleus to the cytoplasm where GTP hydrolysis releases Ran. The directionality of nuclear import is thought to be conferred by an asymmetric distribution of the GTP- and GDP-bound forms of Ran between the cytoplasm and nucleus. Mediates autonomously the nuclear import of ribosomal proteins RPL23A, RPS7 and RPL5. In association with KPNB1 mediates the nuclear import of H1 histone and the Ran-binding site of IPO7 is not required but synergizes with that of KPNB1 in importin/substrate complex dissociation. Promotes odontoblast differentiation via promoting nuclear translocation of DLX3, KLF4, SMAD2, thereby facilitating the transcription of target genes that play a role in odontoblast differentiation. Facilitates BMP4-induced translocation of SMAD1 to the nucleus and recruitment to the MSX1 gene promoter, thereby promotes the expression of the odontogenic regulator MSX1 in dental mesenchymal cells. Also promotes odontoblast differentiation by facilitating the nuclear translocation of HDAC6 and subsequent repression of RUNX2 expression. Inhibits osteoblast differentiation by inhibiting nuclear translocation of RUNX2 and therefore inhibition of RUNX2 target gene transcription. In vitro, mediates nuclear import of H2A, H2B, H3 and H4 histones. Its function is as follows. (Microbial infection) Mediates the nuclear import of HIV-1 reverse transcription complex (RTC) integrase. Binds and mediates the nuclear import of HIV-1 Rev. The sequence is that of Importin-7 (IPO7) from Homo sapiens (Human).